Here is a 729-residue protein sequence, read N- to C-terminus: DNA topoisomerase 3 (729 aa).

In terms of domain architecture, Toprim spans 3-136 (KSVVIAEKPS…IKRLWISSVT (134 aa)). Residues E9 and D105 each coordinate Mg(2+). The 442-residue stretch at 153–594 (YDNLYASAVA…EMKNYTKEIV (442 aa)) folds into the Topo IA-type catalytic domain. Positions 187-192 (NCGRVQ) are interaction with DNA. The active-site O-(5'-phospho-DNA)-tyrosine intermediate is Y310. A compositionally biased stretch (basic and acidic residues) spans 686-713 (ERRKKESGNKADKRDVQKYMKQQKKEEE). Residues 686 to 718 (ERRKKESGNKADKRDVQKYMKQQKKEEEPLNNP) are disordered.

This sequence belongs to the type IA topoisomerase family. The cofactor is Mg(2+).

The catalysed reaction is ATP-independent breakage of single-stranded DNA, followed by passage and rejoining.. Functionally, releases the supercoiling and torsional tension of DNA, which is introduced during the DNA replication and transcription, by transiently cleaving and rejoining one strand of the DNA duplex. Introduces a single-strand break via transesterification at a target site in duplex DNA. The scissile phosphodiester is attacked by the catalytic tyrosine of the enzyme, resulting in the formation of a DNA-(5'-phosphotyrosyl)-enzyme intermediate and the expulsion of a 3'-OH DNA strand. The free DNA strand then undergoes passage around the unbroken strand, thus removing DNA supercoils. Finally, in the religation step, the DNA 3'-OH attacks the covalent intermediate to expel the active-site tyrosine and restore the DNA phosphodiester backbone. In Bacillus cereus (strain ATCC 10987 / NRS 248), this protein is DNA topoisomerase 3.